Reading from the N-terminus, the 268-residue chain is Protein atz-1 (268 aa).

Residues 171–243 (VDDANKLTEV…EEGEEDYEEE (73 aa)) are a coiled coil. The disordered stretch occupies residues 229–268 (DLMKEEEGEEDYEEEENYEVEEDFEDEEEYDEEGEEEDYE). Residues 231 to 268 (MKEEEGEEDYEEEENYEVEEDFEDEEEYDEEGEEEDYE) show a composition bias toward acidic residues.

The protein localises to the nucleus. Functionally, plays a role in meiosis, germline development and oocyte morphogenesis. May play a role in DNA replication. In the germline, involved in the maintenance of transition zone nuclei and in chromosome structure and organization, but not required for mitotic proliferation. This is Protein atz-1 from Caenorhabditis elegans.